Here is a 387-residue protein sequence, read N- to C-terminus: Phosphoglycerate kinase (387 aa).

Residues 21–23, arginine 36, 59–62, arginine 113, and arginine 146 contribute to the substrate site; these read DLN and HLGR. ATP is bound by residues lysine 197, glutamate 314, and 340 to 343; that span reads GGDT.

This sequence belongs to the phosphoglycerate kinase family. Monomer.

The protein resides in the cytoplasm. It carries out the reaction (2R)-3-phosphoglycerate + ATP = (2R)-3-phospho-glyceroyl phosphate + ADP. The protein operates within carbohydrate degradation; glycolysis; pyruvate from D-glyceraldehyde 3-phosphate: step 2/5. The protein is Phosphoglycerate kinase of Pseudomonas entomophila (strain L48).